The chain runs to 417 residues: Glucose-1-phosphatase (417 aa).

The first 23 residues, 1 to 23, serve as a signal peptide directing secretion; sequence MKYKVLTLCLSAALFAPIAPTMA. Arg-41 lines the substrate pocket. The Nucleophile role is filled by His-42. Residues Arg-45, Arg-118, and Glu-220 each contribute to the substrate site. Asp-315 functions as the Proton donor in the catalytic mechanism.

It belongs to the histidine acid phosphatase family. Homodimer.

The protein resides in the periplasm. The catalysed reaction is alpha-D-glucose 1-phosphate + H2O = D-glucose + phosphate. The protein is Glucose-1-phosphatase (agp) of Providencia rettgeri.